A 270-amino-acid chain; its full sequence is Interleukin-2 receptor subunit alpha (270 aa).

Positions 1 to 21 are cleaved as a signal peptide; that stretch reads MEPSLLMWGFFTFTMIPGCMA. The region spanning 22-84 is the Sushi 1 domain; sequence GACVQQPPSL…FWENKCQCMP (63 aa). The Extracellular segment spans residues 22–245; that stretch reads GACVQQPPSL…QPIIFTTQYQ (224 aa). 3 cysteine pairs are disulfide-bonded: Cys24/Cys67, Cys49/Cys80, and Cys51/Cys82. N-linked (GlcNAc...) asparagine glycans are attached at residues Asn33 and Asn70. Residues 87–124 form a disordered region; it reads SPRIPVKQVTPRPEEQKERKTTETQGQMQPPNQANLPG. Positions 98-108 are enriched in basic and acidic residues; the sequence is RPEEQKERKTT. Residues 112–121 are compositionally biased toward polar residues; the sequence is GQMQPPNQAN. The Sushi 2 domain occupies 124 to 191; the sequence is GHCKEPPPWE…WTQPKLKCKS (68 aa). 2 cysteine pairs are disulfide-bonded: Cys126–Cys171 and Cys153–Cys189. N-linked (GlcNAc...) asparagine glycosylation is found at Asn164 and Asn195. Residues 190–225 form a disordered region; that stretch reads KSEKENGSFPEPQMSTAAPPTTKTSLPTRTKGTTDS. The span at 202 to 225 shows a compositional bias: polar residues; that stretch reads QMSTAAPPTTKTSLPTRTKGTTDS. Residue Asn227 is glycosylated (N-linked (GlcNAc...) asparagine). A helical membrane pass occupies residues 246–264; sequence LAVAGCVLLLLSILLLSGL. The Cytoplasmic segment spans residues 265–270; that stretch reads TWQRRR.

As to quaternary structure, non-covalent dimer of an alpha and a beta subunit. IL2R exists in 3 different forms: a high affinity dimer, an intermediate affinity monomer (beta subunit), and a low affinity monomer (alpha subunit). The high and intermediate affinity forms also associate with a gamma subunit.

The protein resides in the membrane. Functionally, receptor for interleukin-2. The receptor is involved in the regulation of immune tolerance by controlling regulatory T cells (TREGs) activity. TREGs suppress the activation and expansion of autoreactive T-cells. This Sus scrofa (Pig) protein is Interleukin-2 receptor subunit alpha (IL2RA).